The chain runs to 439 residues: Prenyltransferase iacE (439 aa).

Substrate contacts are provided by residues 88–89, Glu-97, Arg-112, Lys-198, Tyr-200, Arg-271, Lys-273, and Tyr-275; that span reads WI.

The protein belongs to the tryptophan dimethylallyltransferase family.

The enzyme catalyses siccayne + dimethylallyl diphosphate = pestalodiol + diphosphate. It participates in secondary metabolite biosynthesis. In terms of biological role, prenyltransferase; part of the gene cluster that mediates the biosynthesis of iso-A82775C, a enylepoxycyclohexane and biosynthetic precursor of the chloropestolide anticancer natural products. Within the cluster, the prenyltransferase iacE prenylates siccayne to generate pestalodiol E, using dimethylallyl diphosphate (DMAPP) as cosubstrate. The probable oxidoreductase iacF is then involved in the epoxidation of pestalodiol F to pestalodiol F, which is further converted to pestalofone A by the short-chain dehydrogenase/reductase iacG. Iso-A82775C is subsequently generated from pestalofone A by the short-chain dehydrogenase/reductase iacC. Iso-A82775C is further condensed with maldoxin via a Diels-Alder reaction to produce the anticancer natural products chloropestolides A to E. This is Prenyltransferase iacE from Pestalotiopsis fici (strain W106-1 / CGMCC3.15140).